A 1438-amino-acid chain; its full sequence is Membrane-anchored lipid-binding protein YSP2 (1438 aa).

The segment covering methionine 1–phenylalanine 17 has biased composition (basic and acidic residues). Disordered regions lie at residues methionine 1–proline 97, lysine 174–proline 194, glutamine 200–asparagine 219, glutamine 285–asparagine 308, threonine 338–phenylalanine 418, aspartate 455–lysine 485, and serine 505–serine 543. Topologically, residues methionine 1–asparagine 1277 are cytoplasmic. Serine 13 is modified (phosphoserine). Residues phenylalanine 18–glutamine 29 show a composition bias toward basic residues. A compositionally biased stretch (basic and acidic residues) spans proline 30–serine 44. Positions threonine 45–alanine 58 are enriched in low complexity. Residues isoleucine 74–proline 97 show a composition bias toward polar residues. 2 stretches are compositionally biased toward low complexity: residues glutamine 286–proline 298 and proline 374–asparagine 398. Serine 411 bears the Phosphoserine mark. A compositionally biased stretch (low complexity) spans aspartate 455–leucine 470. Positions serine 471–lysine 485 are enriched in polar residues. Serine 596 carries the phosphoserine modification. Residues glutamate 648 to threonine 716 form the GRAM domain. A disordered region spans residues serine 777–threonine 843. Positions aspartate 783–aspartate 800 are enriched in acidic residues. Residues asparagine 818–tyrosine 832 are compositionally biased toward polar residues. Residues asparagine 851–aspartate 1018 enclose the VASt 1 domain. Position 1032 is a phosphoserine (serine 1032). The VASt 2 domain maps to aspartate 1059–serine 1225. A disordered region spans residues serine 1225–phenylalanine 1257. Positions threonine 1227 to serine 1243 are enriched in basic residues. The helical transmembrane segment at isoleucine 1278–phenylalanine 1298 threads the bilayer. The Lumenal portion of the chain corresponds to arginine 1299 to leucine 1438. N-linked (GlcNAc...) asparagine glycans are attached at residues asparagine 1306, asparagine 1373, and asparagine 1430.

It belongs to the YSP2 family.

It is found in the mitochondrion membrane. The protein localises to the endoplasmic reticulum membrane. Involved in induction of programmed cell death in response to reactive oxygen species (ROS). May be involved in sterol transfer between intracellular membranes. In Saccharomyces cerevisiae (strain ATCC 204508 / S288c) (Baker's yeast), this protein is Membrane-anchored lipid-binding protein YSP2.